Reading from the N-terminus, the 264-residue chain is MKQYKELCRHVLQHGDEKGDRTGTGTISTFGYQMRFDLQEGFPLLTTKKLHLKSIIHELLWFLKGDTNVKYLQENGVRIWNEWADENGELGRVYGAQWRSWASGDGETVDQITKLIHDIEHNPNSRRLIVSAWNPGEIDQMALPPCHCLFQFYVSNGKLSCQLYQRSADIFLGVPFNIASYALLTMMIAKVTNLEPGEFVHTLGDAHIYQNHLPQVNMQLEREERALPQLRITRDVKSIFDFTFDDFVLENYDPHPHIKGEVSV.

Arg-21 lines the dUMP pocket. (6R)-5,10-methylene-5,6,7,8-tetrahydrofolate is bound at residue His-51. 126–127 (RR) contacts dUMP. Cys-146 functions as the Nucleophile in the catalytic mechanism. DUMP-binding positions include 166-169 (RSAD), Asn-177, and 207-209 (HIY). Asp-169 contacts (6R)-5,10-methylene-5,6,7,8-tetrahydrofolate. Residue Ser-263 participates in (6R)-5,10-methylene-5,6,7,8-tetrahydrofolate binding.

Belongs to the thymidylate synthase family. Bacterial-type ThyA subfamily. Homodimer.

Its subcellular location is the cytoplasm. It catalyses the reaction dUMP + (6R)-5,10-methylene-5,6,7,8-tetrahydrofolate = 7,8-dihydrofolate + dTMP. It functions in the pathway pyrimidine metabolism; dTTP biosynthesis. In terms of biological role, catalyzes the reductive methylation of 2'-deoxyuridine-5'-monophosphate (dUMP) to 2'-deoxythymidine-5'-monophosphate (dTMP) while utilizing 5,10-methylenetetrahydrofolate (mTHF) as the methyl donor and reductant in the reaction, yielding dihydrofolate (DHF) as a by-product. This enzymatic reaction provides an intracellular de novo source of dTMP, an essential precursor for DNA biosynthesis. The chain is Thymidylate synthase from Bacillus pumilus (strain SAFR-032).